Here is a 306-residue protein sequence, read N- to C-terminus: 2-phosphoglycerate kinase (306 aa).

One can recognise an ATP-cone domain in the interval 1 to 90 (MIMVQGEVSG…LWRKIRQCKE (90 aa)).

The protein belongs to the 2-phosphoglycerate kinase family. Requires a divalent metal cation as cofactor.

The enzyme catalyses (2R)-2-phosphoglycerate + ATP = (2R)-2,3-bisphosphoglycerate + ADP + H(+). It functions in the pathway thermoadapter biosynthesis; cyclic 2,3-diphosphoglycerate biosynthesis; cyclic 2,3-diphosphoglycerate from 2-phospho-D-glycerate: step 1/2. Its function is as follows. Catalyzes the phosphorylation of 2-phosphoglycerate to 2,3-diphosphoglycerate. Involved in the biosynthesis of cyclic 2,3-bisphosphoglycerate, a thermoprotectant. The sequence is that of 2-phosphoglycerate kinase from Methanothermobacter thermautotrophicus (strain ATCC 29096 / DSM 1053 / JCM 10044 / NBRC 100330 / Delta H) (Methanobacterium thermoautotrophicum).